The primary structure comprises 518 residues: MNSSSDGANEGAGAAADNGPTKVAESIAIIIIDILICLGNLVIVVTLYKKSYLLSLSNKFVFSLTFSNLLLSMLVLPFVVVSSILREWIFGVVWCNFSALLYMLISSASMLTLGIIAIDRYYAVLYPMVYPMKITGNRAVLALVYVWLHSLIGCLPPLFGWSTLEFDHFKWMCVAAWHKEAGYTAFWQVWCALLPFIVMMICYGFIFRVARIKARKIHCGTVIIVQEASQKNGRKNSSTSTSSSGSRKNGFSSIVYSANQCKALITILVVIGAFVLTWGPYMIVISTEALKGKNSVSPVLETLATWLSFTSAICHPLIYGLWNKTVRKELLGMCFGNRYRDPFHQQHRTSRMFSISNRITDLGLSPHLTALMARGTESEHQSTTTNTGFSCSNESGTDVMLLDDTSSDATQLHRVIYSRRKSSVTFEDEVEQKNDARTMPTQPTAPSESLESYAFNLAKAIEMDAKISLFGEDVFPSNVQALPGNSGINRNRINFIQKQRVQLQSIEEGNIETSKCDV.

At Met1–Ser26 the chain is on the extracellular side. Asn2 is a glycosylation site (N-linked (GlcNAc...) asparagine). Residues Ile27–Leu47 traverse the membrane as a helical segment. Residues Tyr48–Lys59 lie on the Cytoplasmic side of the membrane. The helical transmembrane segment at Phe60–Val80 threads the bilayer. Over Val81–Phe97 the chain is Extracellular. Cys95 and Cys173 are oxidised to a cystine. Asn96 carries N-linked (GlcNAc...) asparagine glycosylation. A helical membrane pass occupies residues Ser98–Ile118. At Asp119–Arg138 the chain is on the cytoplasmic side. The chain crosses the membrane as a helical span at residues Ala139–Phe159. Residues Gly160–Ala185 lie on the Extracellular side of the membrane. The chain crosses the membrane as a helical span at residues Phe186–Ile206. Residues Phe207 to Leu264 lie on the Cytoplasmic side of the membrane. Residues Ile265 to Ile285 traverse the membrane as a helical segment. The Extracellular segment spans residues Ser286–Glu301. Residues Thr302 to Trp322 form a helical membrane-spanning segment. Over Asn323–Val518 the chain is Cytoplasmic. Positions Glu429–Glu448 are disordered. Over residues Met439–Glu448 the composition is skewed to polar residues.

The protein belongs to the G-protein coupled receptor 1 family.

The protein localises to the cell projection. Its subcellular location is the cilium membrane. It localises to the cell membrane. In terms of biological role, key negative regulator of Shh signaling during neural tube development. Recruited to primary cilia and acts as a regulator of the PKA-dependent basal repression machinery in Shh signaling by increasing cAMP levels, leading to promote the PKA-dependent processing of gli3 into gli3r and repress the Shh signaling. In presence of shh, it is removed from primary cilia, preventing its activity and allowing activation of the Shh signaling. In Xenopus tropicalis (Western clawed frog), this protein is G-protein coupled receptor 161 (gpr161).